The primary structure comprises 1710 residues: Ankyrin repeat domain-containing protein 26 (1710 aa).

Residues Met-1–His-41 are disordered. A phosphoserine mark is found at Ser-11 and Ser-15. 5 ANK repeats span residues Arg-45 to Asp-75, Met-79 to Val-108, Glu-112 to Leu-141, His-145 to Ala-174, and Asp-178 to Ala-207. The interval Lys-222–Pro-274 is disordered. Phosphoserine occurs at positions 241, 261, 489, and 530. Positions Asp-504–Asn-630 are disordered. Positions Ala-529–Asp-566 form a coiled coil. Positions Thr-569–Gly-580 are enriched in acidic residues. Composition is skewed to basic and acidic residues over residues Lys-586–Glu-602 and Lys-613–Lys-626. Ser-631 is modified (phosphoserine). Residues Asp-650–Glu-660 are compositionally biased toward acidic residues. Positions Asp-650–Cys-698 are disordered. Over residues Gly-661–Lys-673 the composition is skewed to basic and acidic residues. 4 coiled-coil regions span residues Lys-743 to Met-873, Glu-905 to Leu-1472, Asn-1517 to Leu-1587, and Leu-1649 to Gly-1674. The segment at Ala-892–His-912 is disordered.

Interacts with TRIO. Interacts with GPS2. Interacts with CCDC85B. Interacts with HMMR.

In terms of biological role, acts as a regulator of adipogenesis. Involved in the regulation of the feeding behavior. This Homo sapiens (Human) protein is Ankyrin repeat domain-containing protein 26.